The sequence spans 773 residues: Probable dipeptidyl peptidase 4 (773 aa).

The N-terminal stretch at 1-18 (MKLSVLSVLLVSVAQAAA) is a signal peptide. Asn-37, Asn-80, Asn-112, Asn-220, Asn-471, and Asn-496 each carry an N-linked (GlcNAc...) asparagine glycan. The active-site Charge relay system is the Ser-619. A glycan (N-linked (GlcNAc...) asparagine) is linked at Asn-671. Active-site charge relay system residues include Asp-696 and His-731.

Belongs to the peptidase S9B family.

The protein localises to the secreted. The catalysed reaction is Release of an N-terminal dipeptide, Xaa-Yaa-|-Zaa-, from a polypeptide, preferentially when Yaa is Pro, provided Zaa is neither Pro nor hydroxyproline.. Functionally, extracellular dipeptidyl-peptidase which removes N-terminal dipeptides sequentially from polypeptides having unsubstituted N-termini provided that the penultimate residue is proline. The chain is Probable dipeptidyl peptidase 4 (dpp4) from Emericella nidulans (strain FGSC A4 / ATCC 38163 / CBS 112.46 / NRRL 194 / M139) (Aspergillus nidulans).